Consider the following 77-residue polypeptide: Acyl carrier protein homolog (77 aa).

The region spanning 1 to 76 (MSINIKDLIM…DLINAFEDVL (76 aa)) is the Carrier domain. Ser-36 is modified (O-(pantetheine 4'-phosphoryl)serine).

In terms of processing, 4'-phosphopantetheine is transferred from CoA to a specific serine of the apo-ACP-like protein.

Its pathway is lipid metabolism; fatty acid biosynthesis. In terms of biological role, carrier of the growing fatty acid chain in fatty acid biosynthesis. This chain is Acyl carrier protein homolog, found in Ureaplasma parvum serovar 3 (strain ATCC 700970).